The following is a 294-amino-acid chain: Porphobilinogen deaminase (294 aa).

Cysteine 232 carries the S-(dipyrrolylmethanemethyl)cysteine modification.

Belongs to the HMBS family. Monomer. Dipyrromethane is required as a cofactor.

It catalyses the reaction 4 porphobilinogen + H2O = hydroxymethylbilane + 4 NH4(+). It participates in porphyrin-containing compound metabolism; protoporphyrin-IX biosynthesis; coproporphyrinogen-III from 5-aminolevulinate: step 2/4. In terms of biological role, tetrapolymerization of the monopyrrole PBG into the hydroxymethylbilane pre-uroporphyrinogen in several discrete steps. The sequence is that of Porphobilinogen deaminase from Corynebacterium diphtheriae (strain ATCC 700971 / NCTC 13129 / Biotype gravis).